Here is a 249-residue protein sequence, read N- to C-terminus: MRRKIIAGNWKMNGDQDLVRRVAERAADSAGDAELAVCPPYPLLAAAASQLPFGVALGAQDVSEYDSGAYTGEVSASMLLEAGCRYVIVGHSERRTLYGEDNGRVAGKFVAARNAGLTPILCVGETLAERDAERTESVVGEQLDAVMDAVGGATFQGAVIAYEPVWAIGTGRTATPEQAQAVHAFIRQRVQERDAGEIADQLPILYGGSMKADNAAELLAQPDIDGGLIGGASLDPDSFLSIYNAAAEG.

Residue 9–11 (NWK) participates in substrate binding. H91 acts as the Electrophile in catalysis. The active-site Proton acceptor is E163. Residues G169, S209, and 230-231 (GG) each bind substrate.

Belongs to the triosephosphate isomerase family. Homodimer.

It is found in the cytoplasm. It carries out the reaction D-glyceraldehyde 3-phosphate = dihydroxyacetone phosphate. The protein operates within carbohydrate biosynthesis; gluconeogenesis. It participates in carbohydrate degradation; glycolysis; D-glyceraldehyde 3-phosphate from glycerone phosphate: step 1/1. Functionally, involved in the gluconeogenesis. Catalyzes stereospecifically the conversion of dihydroxyacetone phosphate (DHAP) to D-glyceraldehyde-3-phosphate (G3P). In Halorhodospira halophila (strain DSM 244 / SL1) (Ectothiorhodospira halophila (strain DSM 244 / SL1)), this protein is Triosephosphate isomerase.